A 270-amino-acid polypeptide reads, in one-letter code: Small ribosomal subunit protein uS2 (270 aa).

Acidic residues predominate over residues 207–225 (EEPENTEEAAEEAATEEVV). A disordered region spans residues 207–270 (EEPENTEEAA…SESAPAPVAA (64 aa)). Residues 226–258 (ETAAAEAAAATNADNWDVAPDAGAGAADWAATD) are compositionally biased toward low complexity.

Belongs to the universal ribosomal protein uS2 family. As to quaternary structure, component of the small ribosomal subunit. Mature ribosomes consist of a small (40S) and a large (60S) subunit. The 40S subunit contains about 33 different proteins and 1 molecule of RNA (18S). The 60S subunit contains about 49 different proteins and 3 molecules of RNA (25S, 5.8S and 5S). Interacts with RPS21.

It localises to the cytoplasm. Its function is as follows. Required for the assembly and/or stability of the 40S ribosomal subunit. Required for the processing of the 20S rRNA-precursor to mature 18S rRNA in a late step of the maturation of 40S ribosomal subunits. In Yarrowia lipolytica (strain CLIB 122 / E 150) (Yeast), this protein is Small ribosomal subunit protein uS2.